A 261-amino-acid polypeptide reads, in one-letter code: 5'-nucleotidase SurE (261 aa).

A divalent metal cation-binding residues include D8, D9, S43, and N96.

The protein belongs to the SurE nucleotidase family. It depends on a divalent metal cation as a cofactor.

The protein localises to the cytoplasm. It carries out the reaction a ribonucleoside 5'-phosphate + H2O = a ribonucleoside + phosphate. Functionally, nucleotidase that shows phosphatase activity on nucleoside 5'-monophosphates. The polypeptide is 5'-nucleotidase SurE (Cereibacter sphaeroides (strain KD131 / KCTC 12085) (Rhodobacter sphaeroides)).